Reading from the N-terminus, the 32-residue chain is Delta-conotoxin-like CnVIC (32 aa).

3 disulfide bridges follow: Cys-3/Cys-18, Cys-10/Cys-22, and Cys-17/Cys-27. Residues Pro-6 and Pro-14 each carry the 4-hydroxyproline modification.

The protein belongs to the conotoxin O1 superfamily. Expressed by the venom duct.

The protein resides in the secreted. Its function is as follows. Delta-conotoxins bind to site 6 of voltage-gated sodium channels (Nav) and inhibit the inactivation process. This toxin acts on Nav1.2/SCN2A, Nav1.4/SCN4A, Nav1.5/SCN5A (weak activity), Nav1.6/SCN8A (EC(50)=2.5 uM). This chain is Delta-conotoxin-like CnVIC, found in Conus consors (Singed cone).